The following is a 388-amino-acid chain: Succinate--CoA ligase [ADP-forming] subunit beta (388 aa).

Residues 9-244 enclose the ATP-grasp domain; sequence KQLFAEYGLP…PSQDDAREAH (236 aa). ATP-binding positions include Lys46, 53–55, Glu99, Thr102, and Glu107; that span reads GRG. Residues Asn199 and Asp213 each contribute to the Mg(2+) site. Residues Asn264 and 321 to 323 each bind substrate; that span reads GIV.

Belongs to the succinate/malate CoA ligase beta subunit family. As to quaternary structure, heterotetramer of two alpha and two beta subunits. The cofactor is Mg(2+).

The catalysed reaction is succinate + ATP + CoA = succinyl-CoA + ADP + phosphate. It carries out the reaction GTP + succinate + CoA = succinyl-CoA + GDP + phosphate. The protein operates within carbohydrate metabolism; tricarboxylic acid cycle; succinate from succinyl-CoA (ligase route): step 1/1. Functionally, succinyl-CoA synthetase functions in the citric acid cycle (TCA), coupling the hydrolysis of succinyl-CoA to the synthesis of either ATP or GTP and thus represents the only step of substrate-level phosphorylation in the TCA. The beta subunit provides nucleotide specificity of the enzyme and binds the substrate succinate, while the binding sites for coenzyme A and phosphate are found in the alpha subunit. The chain is Succinate--CoA ligase [ADP-forming] subunit beta from Pseudomonas putida (strain ATCC 700007 / DSM 6899 / JCM 31910 / BCRC 17059 / LMG 24140 / F1).